The chain runs to 558 residues: Putative ABC transporter ATP-binding protein SAG1633 (558 aa).

2 ABC transporter domains span residues 5–246 (IEWK…GIRE) and 295–527 (LSVQ…THLK). Residues 39-46 (GPSGSGKS) and 328-335 (GKNGAGKS) contribute to the ATP site.

Belongs to the ABC transporter superfamily.

Its subcellular location is the cell membrane. Functionally, probably part of an ABC transporter complex. Responsible for energy coupling to the transport system. This chain is Putative ABC transporter ATP-binding protein SAG1633, found in Streptococcus agalactiae serotype V (strain ATCC BAA-611 / 2603 V/R).